The primary structure comprises 332 residues: 1-acyl-sn-glycerol-3-phosphate acyltransferase CHLREDRAFT_174358 (332 aa).

A helical membrane pass occupies residues 96 to 116 (FLLSLPLFVTMMVMAPLVLAF). An HXXXXD motif motif is present at residues 163-168 (HQSFLD). The chain crosses the membrane as a helical span at residues 185–205 (TSNFLIPIIGWSMFLTGHVMI). An EGTR motif motif is present at residues 235 to 238 (EGTR).

Belongs to the 1-acyl-sn-glycerol-3-phosphate acyltransferase family.

It localises to the membrane. The catalysed reaction is a 1-acyl-sn-glycero-3-phosphate + an acyl-CoA = a 1,2-diacyl-sn-glycero-3-phosphate + CoA. Its pathway is phospholipid metabolism; CDP-diacylglycerol biosynthesis; CDP-diacylglycerol from sn-glycerol 3-phosphate: step 2/3. Functionally, converts lysophosphatidic acid (LPA) into phosphatidic acid by incorporating an acyl moiety at the sn-2 position of the glycerol backbone. This Chlamydomonas reinhardtii (Chlamydomonas smithii) protein is 1-acyl-sn-glycerol-3-phosphate acyltransferase CHLREDRAFT_174358.